A 1052-amino-acid chain; its full sequence is Error-prone DNA polymerase (1052 aa).

This sequence belongs to the DNA polymerase type-C family. DnaE2 subfamily.

The protein localises to the cytoplasm. It carries out the reaction DNA(n) + a 2'-deoxyribonucleoside 5'-triphosphate = DNA(n+1) + diphosphate. Functionally, DNA polymerase involved in damage-induced mutagenesis and translesion synthesis (TLS). It is not the major replicative DNA polymerase. The polypeptide is Error-prone DNA polymerase (Bordetella bronchiseptica (strain ATCC BAA-588 / NCTC 13252 / RB50) (Alcaligenes bronchisepticus)).